The chain runs to 75 residues: Small ribosomal subunit protein bS18 (75 aa).

It belongs to the bacterial ribosomal protein bS18 family. As to quaternary structure, part of the 30S ribosomal subunit. Forms a tight heterodimer with protein bS6.

In terms of biological role, binds as a heterodimer with protein bS6 to the central domain of the 16S rRNA, where it helps stabilize the platform of the 30S subunit. The chain is Small ribosomal subunit protein bS18 from Baumannia cicadellinicola subsp. Homalodisca coagulata.